A 419-amino-acid chain; its full sequence is Elongation factor Tu, chloroplastic (419 aa).

One can recognise a tr-type G domain in the interval 10 to 214; it reads KPHVNIGTIG…TVDEHIPTPK (205 aa). Residues 19 to 26 form a G1 region; that stretch reads GHVDHGKT. A GTP-binding site is contributed by 19–26; it reads GHVDHGKT. Residue T26 coordinates Mg(2+). The G2 stretch occupies residues 60-64; it reads GITIN. A G3 region spans residues 81-84; the sequence is DCPG. GTP contacts are provided by residues 81 to 85 and 136 to 139; these read DCPGH and NKAD. Residues 136–139 are G4; sequence NKAD. Positions 174–176 are G5; the sequence is SAL.

This sequence belongs to the TRAFAC class translation factor GTPase superfamily. Classic translation factor GTPase family. EF-Tu/EF-1A subfamily.

It is found in the plastid. The protein localises to the chloroplast. The catalysed reaction is GTP + H2O = GDP + phosphate + H(+). Its function is as follows. GTP hydrolase that promotes the GTP-dependent binding of aminoacyl-tRNA to the A-site of ribosomes during protein biosynthesis. This chain is Elongation factor Tu, chloroplastic (tufA), found in Stigeoclonium helveticum (Green alga).